Reading from the N-terminus, the 221-residue chain is uncharacterized protein (221 aa).

At 1-45 the chain is on the extracellular side; it reads MYAPIRSPITELNESTPSSIPVATSYATCSASFAKLVALLVDDMA. The chain crosses the membrane as a helical span at residues 46-66; the sequence is GLSIVLSEIYIYFKLLFLIVI. Topologically, residues 67-221 are cytoplasmic; it reads TESIQNKLED…KYIVVIKVEQ (155 aa).

The protein localises to the host membrane. This is an uncharacterized protein from Acidianus filamentous virus 1 (isolate United States/Yellowstone) (AFV-1).